A 106-amino-acid polypeptide reads, in one-letter code: Nucleoid-associated protein XAC1110 (106 aa).

Residues 80-89 show a composition bias toward basic and acidic residues; that stretch reads KIDAESKDRM. Residues 80–106 are disordered; sequence KIDAESKDRMGSATAGMQLPPGMKLPF.

This sequence belongs to the YbaB/EbfC family. In terms of assembly, homodimer.

The protein localises to the cytoplasm. Its subcellular location is the nucleoid. Binds to DNA and alters its conformation. May be involved in regulation of gene expression, nucleoid organization and DNA protection. This is Nucleoid-associated protein XAC1110 from Xanthomonas axonopodis pv. citri (strain 306).